The sequence spans 119 residues: Large ribosomal subunit protein bL20 (119 aa).

Belongs to the bacterial ribosomal protein bL20 family.

Functionally, binds directly to 23S ribosomal RNA and is necessary for the in vitro assembly process of the 50S ribosomal subunit. It is not involved in the protein synthesizing functions of that subunit. The chain is Large ribosomal subunit protein bL20 from Legionella pneumophila (strain Paris).